Consider the following 255-residue polypeptide: Protein N-terminal and lysine N-methyltransferase efm7 (255 aa).

Positions 1–25 are disordered; that stretch reads MADNDFEGFGIFEEPEGFRPSTPPP. S-adenosyl-L-methionine is bound by residues Trp-58, 84-86, Asp-106, Trp-137, and Ser-162; that span reads GAG.

Belongs to the class I-like SAM-binding methyltransferase superfamily. EFM7 family.

It localises to the cytoplasm. Functionally, S-adenosyl-L-methionine-dependent protein methyltransferase that trimethylates the N-terminal glycine 'Gly-2' of elongation factor 1-alpha, before also catalyzing the mono- and dimethylation of 'Lys-3'. The chain is Protein N-terminal and lysine N-methyltransferase efm7 from Schizosaccharomyces pombe (strain 972 / ATCC 24843) (Fission yeast).